The chain runs to 441 residues: Protein eva-1 homolog C (441 aa).

Residues 1 to 23 (MLLPGRARQPPTPQPVQHPGLRR) form a disordered region. The signal sequence occupies residues 1–48 (MLLPGRARQPPTPQPVQHPGLRRQVEPPGQLLRLFYCTVLVCSKEISA). Over 49–322 (LTDFSGYLTK…AYIRAHPERA (274 aa)) the chain is Extracellular. N-linked (GlcNAc...) asparagine glycosylation occurs at Asn-62. The 93-residue stretch at 67 to 159 (ACDGDYLNLQ…KYLLVSFKCQ (93 aa)) folds into the SUEL-type lectin 1 domain. N-linked (GlcNAc...) asparagine glycosylation is present at Asn-165. In terms of domain architecture, SUEL-type lectin 2 spans 168 to 260 (VCEDQELKLH…KYLTVTYACV (93 aa)). A helical membrane pass occupies residues 323-343 (ALLFVSSVCIGLALTLCALVI). The Cytoplasmic segment spans residues 344-441 (RESCAKDFRD…SLPRNMGQFY (98 aa)). Positions 362 to 390 (VPGSDKVEEDSEDEEEEEDPSESDFPGEL) are disordered. The span at 368-383 (VEEDSEDEEEEEDPSE) shows a compositional bias: acidic residues.

This sequence belongs to the EVA1 family. In terms of tissue distribution, ubiquitous.

The protein resides in the membrane. Functionally, binds heparin. The protein is Protein eva-1 homolog C (EVA1C) of Homo sapiens (Human).